A 155-amino-acid chain; its full sequence is Ribonuclease H (155 aa).

The RNase H type-1 domain occupies 4–145; sequence TEPTVYAYTD…ADRLANRGID (142 aa). Residues D13, E51, D73, and D137 each contribute to the Mg(2+) site.

It belongs to the RNase H family. Monomer. The cofactor is Mg(2+).

The protein localises to the cytoplasm. It catalyses the reaction Endonucleolytic cleavage to 5'-phosphomonoester.. In terms of biological role, endonuclease that specifically degrades the RNA of RNA-DNA hybrids. The protein is Ribonuclease H of Methylococcus capsulatus (strain ATCC 33009 / NCIMB 11132 / Bath).